The primary structure comprises 832 residues: SID1 transmembrane family member 2 (832 aa).

The N-terminal stretch at 1–18 (MIAWRLPLCVLLVASVES) is a signal peptide. Residues 19 to 293 (HLGALGPKNV…VSQAVTSEAY (275 aa)) lie on the Extracellular side of the membrane. N-linked (GlcNAc...) asparagine glycans are attached at residues asparagine 27, asparagine 54, asparagine 60, asparagine 123, asparagine 141, and asparagine 165. Residues 294 to 314 (VGGMLFCLGIFLSFYLLTVLL) form a helical membrane-spanning segment. The Cytoplasmic portion of the chain corresponds to 315-447 (ACWENWRQRK…DKRVLRKKYQ (133 aa)). Residues serine 401, serine 403, and serine 404 each carry the phosphoserine modification. A helical transmembrane segment spans residues 448 to 468 (IYFWNIATIAVFYALPVVQLV). At 469–499 (ITYQTVVNVTGNQDICYYNFLCAHPLGNLSA) the chain is on the extracellular side. Residues asparagine 476 and asparagine 496 are each glycosylated (N-linked (GlcNAc...) asparagine). Residues 500–520 (FNNILSNLGYILLGLLFLLII) traverse the membrane as a helical segment. Residues 521–546 (LQREINHNRALLRNDLYALECGIPKH) lie on the Cytoplasmic side of the membrane. Residues 547 to 567 (FGLFYAMGTALMMEGLLSACY) form a helical membrane-spanning segment. The Extracellular portion of the chain corresponds to 568-605 (HVCPNYTNFQFDTSFMYMIAGLCMLKLYQKRHPDINAS). N-linked (GlcNAc...) asparagine glycans are attached at residues asparagine 572 and asparagine 603. The chain crosses the membrane as a helical span at residues 606–626 (AYSAYACLAIVIFFSVLGVVF). Topologically, residues 627-631 (GKGNT) are cytoplasmic. Residues 632 to 652 (AFWIVFSVIHIISTLLLSTQL) traverse the membrane as a helical segment. Over 653 to 688 (YYMGRWKLDSGIFRRILHVLYTDCIRQCSGPLYTDR) the chain is Extracellular. The helical transmembrane segment at 689–709 (MVLLVMGNIINWSLAAYGLIM) threads the bilayer. Residues 710 to 715 (RPNDFA) are Cytoplasmic-facing. Residues 716–736 (SYLLAIGICNLLLYFAFYIIM) traverse the membrane as a helical segment. The Extracellular portion of the chain corresponds to 737 to 746 (KLRSGERIKL). Residues 747–767 (IPLLCIVCTSVVWGFALFFFF) form a helical membrane-spanning segment. Topologically, residues 768 to 796 (QGLSTWQKTPAESREHNRDCILLDFFDDH) are cytoplasmic. Residues 797–817 (DIWHFLSSIAMFGSFLVLLTL) form a helical membrane-spanning segment. Topologically, residues 818–832 (DDDLDTVQRDKIYVF) are extracellular.

This sequence belongs to the SID1 family. As to quaternary structure, interacts with adapter protein complex 1 (AP-1) and AP-2, but not AP-3 and AP-4. Interacts with LAMP2. Glycosylated. In terms of tissue distribution, widely expressed, including in the liver, brain and kidney (at protein level).

The protein resides in the lysosome membrane. It localises to the cell membrane. Functionally, mediates the translocation of RNA and DNA across the lysosomal membrane during RNA and DNA autophagy (RDA), a process in which RNA and DNA is directly imported into lysosomes in an ATP-dependent manner, and degraded. Involved in the uptake of single-stranded oligonucleotides by living cells, a process called gymnosis. In vitro, mediates the uptake of linear DNA more efficiently than that of circular DNA, but exhibits similar uptake efficacy toward RNA and DNA. Binds long double-stranded RNA (dsRNA) (500 - 700 base pairs), but not dsRNA shorter than 100 bp. The chain is SID1 transmembrane family member 2 (Sidt2) from Mus musculus (Mouse).